Consider the following 137-residue polypeptide: 2-iminobutanoate/2-iminopropanoate deaminase (137 aa).

S2 is subject to N-acetylserine. 3 positions are modified to N6-succinyllysine: K13, K60, and K67. T74 is subject to Phosphothreonine.

It belongs to the RutC family. Homotrimer. Interacts with YTHDF2. In terms of tissue distribution, liver and kidney.

It localises to the cytoplasm. It is found in the nucleus. The protein resides in the peroxisome. The protein localises to the mitochondrion. It carries out the reaction 2-iminobutanoate + H2O = 2-oxobutanoate + NH4(+). The enzyme catalyses 2-iminopropanoate + H2O = pyruvate + NH4(+). Its function is as follows. Catalyzes the hydrolytic deamination of enamine/imine intermediates that form during the course of normal metabolism. May facilitate the release of ammonia from these potentially toxic reactive metabolites, reducing their impact on cellular components. It may act on enamine/imine intermediates formed by several types of pyridoxal-5'-phosphate-dependent dehydratases including L-threonine dehydratase. Also promotes endoribonucleolytic cleavage of some transcripts by promoting recruitment of the ribonuclease P/MRP complex. Acts by bridging YTHDF2 and the ribonuclease P/MRP complex. RIDA/HRSP12 binds to N6-methyladenosine (m6A)-containing mRNAs containing a 5'-GGUUC-3' motif: cooperative binding of RIDA/HRSP12 and YTHDF2 to such transcripts lead to recruitment of the ribonuclease P/MRP complex and subsequent endoribonucleolytic cleavage. This chain is 2-iminobutanoate/2-iminopropanoate deaminase, found in Rattus norvegicus (Rat).